Consider the following 193-residue polypeptide: Alpha-S2-casein (193 aa).

Residues 1–15 (MKFFIFTCLLAVVLA) form the signal peptide. Ser23, Ser24, Ser25, Ser28, Ser47, Ser68, Ser123, Ser125, Ser128, and Ser136 each carry phosphoserine.

Belongs to the alpha-casein family. In terms of tissue distribution, mammary gland specific. Secreted in milk.

The protein localises to the secreted. Functionally, important role in the capacity of milk to transport calcium phosphate. The chain is Alpha-S2-casein (CSN1S2) from Camelus dromedarius (Dromedary).